The primary structure comprises 72 residues: Putative snRNP Sm-like protein (72 aa).

The Sm domain occupies 4–72; it reads RPLDILNNAL…RGDNVVYVSP (69 aa).

It belongs to the snRNP Sm proteins family.

The chain is Putative snRNP Sm-like protein from Methanosarcina barkeri (strain Fusaro / DSM 804).